The sequence spans 290 residues: Release factor glutamine methyltransferase (290 aa).

S-adenosyl-L-methionine-binding residues include aspartate 140 and asparagine 181. Position 181 to 184 (181 to 184 (NPPY)) interacts with substrate.

The protein belongs to the protein N5-glutamine methyltransferase family. PrmC subfamily.

It catalyses the reaction L-glutaminyl-[peptide chain release factor] + S-adenosyl-L-methionine = N(5)-methyl-L-glutaminyl-[peptide chain release factor] + S-adenosyl-L-homocysteine + H(+). Methylates the class 1 translation termination release factors RF1/PrfA and RF2/PrfB on the glutamine residue of the universally conserved GGQ motif. This is Release factor glutamine methyltransferase from Chlamydia trachomatis serovar D (strain ATCC VR-885 / DSM 19411 / UW-3/Cx).